The chain runs to 119 residues: GVWQFAYMIAKYTGRNPLDYWGYGCWCGLGGKGNPVDAVDRCCYVHDVCYNSITQGPRPTCSRIAPYHKNYYFTGKKCSTGWLTSKCGRAICACDIAAVKCFRRNHFNKKYRLYKKNIC.

6 disulfides stabilise this stretch: Cys25-Cys119, Cys27-Cys43, Cys42-Cys101, Cys49-Cys94, Cys61-Cys87, and Cys78-Cys92. The Ca(2+) site is built by Gly28 and Gly30. Residue His46 is part of the active site. Asp47 serves as a coordination point for Ca(2+). The active site involves Asp95.

Belongs to the phospholipase A2 family. Homodimer. Ca(2+) is required as a cofactor.

Its subcellular location is the secreted. It is found in the nematocyst. The catalysed reaction is a 1,2-diacyl-sn-glycero-3-phosphocholine + H2O = a 1-acyl-sn-glycero-3-phosphocholine + a fatty acid + H(+). Its function is as follows. Sea anemone phospholipase A2 (PLA2). When incubated with plasma, this protein shows a moderate anticoagulant activity (0.15 ug of enzyme/200 uL of plasma), inhibiting clotting induced by thrombin. This enzyme also induces myotoxicity, and edema. PLA2 catalyzes the calcium-dependent hydrolysis of the 2-acyl groups in 3-sn-phosphoglycerides. The chain is Phospholipase A2 A2-actitoxin-Cgg2a from Condylactis gigantea (Giant Caribbean anemone).